The sequence spans 409 residues: Astacin-like metalloendopeptidase (409 aa).

The signal sequence occupies residues 1–19 (MDLKMLLIFIAFLLPSVLG). The span at 30–39 (TATTESTQVT) shows a compositional bias: low complexity. The segment at 30–54 (TATTESTQVTTEEDIYDSPSPAETD) is disordered. Residues 87-285 (SAINCRNCYW…AKINRLYNCS (199 aa)) enclose the Peptidase M12A domain. Disulfide bonds link cysteine 91-cysteine 94, cysteine 134-cysteine 284, cysteine 155-cysteine 175, cysteine 287-cysteine 313, and cysteine 339-cysteine 362. A Zn(2+)-binding site is contributed by histidine 183. The active site involves glutamate 184. Histidine 187 and histidine 193 together coordinate Zn(2+). A CUB domain is found at 287 to 399 (CSTIIDAAFG…SGFQATFTSA (113 aa)).

The cofactor is Zn(2+). As to expression, expressed in ovary and gonads.

The protein resides in the cytoplasm. It localises to the cell membrane. Its subcellular location is the cytoplasmic vesicle. The protein localises to the secretory vesicle. It is found in the cortical granule. Functionally, probable oocyte-specific oolemmal receptor involved in sperm and egg adhesion and fertilization. May act as a protease. The polypeptide is Astacin-like metalloendopeptidase (ASTL) (Gallus gallus (Chicken)).